Consider the following 140-residue polypeptide: Large ribosomal subunit protein uL14 (140 aa).

This sequence belongs to the universal ribosomal protein uL14 family. Part of the 50S ribosomal subunit. Forms a cluster with proteins L3 and L24e, part of which may contact the 16S rRNA in 2 intersubunit bridges.

Binds to 23S rRNA. Forms part of two intersubunit bridges in the 70S ribosome. The polypeptide is Large ribosomal subunit protein uL14 (Staphylothermus marinus (strain ATCC 43588 / DSM 3639 / JCM 9404 / F1)).